The following is a 278-amino-acid chain: Putative pyruvate, phosphate dikinase regulatory protein (278 aa).

149–156 (GVSRSSKT) provides a ligand contact to ADP.

This sequence belongs to the pyruvate, phosphate/water dikinase regulatory protein family. PDRP subfamily.

It catalyses the reaction N(tele)-phospho-L-histidyl/L-threonyl-[pyruvate, phosphate dikinase] + ADP = N(tele)-phospho-L-histidyl/O-phospho-L-threonyl-[pyruvate, phosphate dikinase] + AMP + H(+). The enzyme catalyses N(tele)-phospho-L-histidyl/O-phospho-L-threonyl-[pyruvate, phosphate dikinase] + phosphate + H(+) = N(tele)-phospho-L-histidyl/L-threonyl-[pyruvate, phosphate dikinase] + diphosphate. Its function is as follows. Bifunctional serine/threonine kinase and phosphorylase involved in the regulation of the pyruvate, phosphate dikinase (PPDK) by catalyzing its phosphorylation/dephosphorylation. This chain is Putative pyruvate, phosphate dikinase regulatory protein, found in Erythrobacter litoralis (strain HTCC2594).